Reading from the N-terminus, the 605-residue chain is Anaerobic ribonucleoside-triphosphate reductase (605 aa).

Residues H64 and H66 each coordinate dCTP. Residues H64, H66, D67, E100, and K103 each contribute to the dGTP site. DCTP contacts are provided by residues E100, K103, Q114, K146, and 445-448 (AENL). DATP contacts are provided by E100, K103, Q114, and K146. E100 contacts dTTP. Positions 114 and 146 each coordinate dTTP. The dGTP site is built by K146, N447, and L448. Residues 482 to 605 (ENITPFEKIS…KEIMHRVKHQ (124 aa)) form the Glycine radical domain. 4 residues coordinate Zn(2+): C543, C546, C561, and C564. G580 is subject to Glycine radical.

The protein belongs to the anaerobic ribonucleoside-triphosphate reductase family. In terms of assembly, homodimer. Forms a tetramer composed of two NrdD and two NrdG subunits.

It carries out the reaction a ribonucleoside 5'-triphosphate + formate + H(+) = a 2'-deoxyribonucleoside 5'-triphosphate + CO2 + H2O. Activated under anaerobic conditions by NrdG, a tightly associated activase. Activation involves the formation of a glycyl radical at Gly-580. Catalyzes the conversion of ribonucleotides into deoxyribonucleotides, which are required for DNA synthesis and repair. This Enterobacteria phage T4 (Bacteriophage T4) protein is Anaerobic ribonucleoside-triphosphate reductase.